Consider the following 393-residue polypeptide: Bifunctional chrysanthemol synthase, chloroplastic (393 aa).

A compositionally biased stretch (low complexity) spans 1-18; the sequence is MACSSSLSSKWASWGASS. The segment at 1–22 is disordered; sequence MACSSSLSSKWASWGASSRPHP. The N-terminal 53 residues, 1 to 53, are a transit peptide targeting the chloroplast; that stretch reads MACSSSLSSKWASWGASSRPHPSVQPFVTRKNVVRYHKPTSELSYSPLTTTLS. Dimethylallyl diphosphate is bound by residues K99, R102, and Q137. D144 and D148 together coordinate Mg(2+). Residues R153, R154, K241, Q280, D287, K297, and K306 each coordinate dimethylallyl diphosphate.

It belongs to the FPP/GGPP synthase family. The cofactor is Mg(2+). Restricted to glandular trichomes during achene maturation. Expressed in flowers and in both ray and disk florets.

The protein resides in the plastid. Its subcellular location is the chloroplast. The enzyme catalyses 2 dimethylallyl diphosphate = (R,R)-chrysanthemyl diphosphate + diphosphate. The catalysed reaction is (R,R)-chrysanthemyl diphosphate + H2O = (R,R)-chrysanthemol + diphosphate. It catalyses the reaction (R)-lavandulyl diphosphate + H2O = (R)-lavandulol + diphosphate. It participates in isoprenoid biosynthesis. Its function is as follows. Component of the monoterpenoid pyrethrins biosynthesis; pyrethrins are widely used plant-derived pesticide. Catalyzes the condensation of two molecules of dimethylallyl diphosphate to produce chrysanthemyl diphosphate (CPP), a monoterpene with a non-head-to-tail or irregular c1'-2-3 linkage between isoprenoid units. In a second step, hydrolyzes the diphosphate moiety of CPP to form chrysanthemol. With a lower efficiency, can also converts dimethylallyl diphosphate into lavandulyl diphosphate (LPP), and subsequently LPP into lavandulol. This Tanacetum cinerariifolium (Dalmatian daisy) protein is Bifunctional chrysanthemol synthase, chloroplastic.